We begin with the raw amino-acid sequence, 156 residues long: Proline dehydrogenase transcriptional activator (156 aa).

Positions 10–71 constitute an HTH asnC-type domain; that stretch reads LDHFDLKILE…VLNPQKLGVD (62 aa). Residues 29 to 48 constitute a DNA-binding region (H-T-H motif); that stretch reads VLQLSKRVGLSKTPCQTRLK.

Functionally, transcriptional activator of the putA gene in response to proline. The protein is Proline dehydrogenase transcriptional activator (putR) of Rhizobium radiobacter (Agrobacterium tumefaciens).